The sequence spans 190 residues: Natural killer cells antigen CD94 (190 aa).

Residues 1-10 (MAAFRTTAWR) are Cytoplasmic-facing. Residues 11–31 (LISGVLGVICLVLMAALGVLL) traverse the membrane as a helical; Signal-anchor for type II membrane protein segment. At 32–190 (KNSLTKRSVQ…FRYICKQQLI (159 aa)) the chain is on the extracellular side. Disulfide bonds link Cys69–Cys81, Cys72–Cys83, Cys100–Cys185, and Cys163–Cys177. The C-type lectin domain occupies 79–186 (YQCNCYFISN…CEKKFRYICK (108 aa)). 2 N-linked (GlcNAc...) asparagine glycosylation sites follow: Asn104 and Asn144.

As to quaternary structure, can form disulfide-bonded heterodimer with NKG2 family members KLRC1 and KLRC2. KLRD1-KLRC1 heterodimer interacts with peptide-bound MHC-E-B2M heterotrimeric complex. KLRD1 plays a prominent role in directly interacting with MHC-E. KLRD1-KLRC1 interacts with much higher affinity with peptide-bound MHC-E-B2M than KLRD1-KLRC2. Interacts with the adapter protein TYROBP/DAP12; this interaction is required for cell surface expression and cell activation.

The protein resides in the cell membrane. Its function is as follows. Immune receptor involved in self-nonself discrimination. In complex with KLRC1 or KLRC2 on cytotoxic and regulatory lymphocyte subsets, recognizes non-classical major histocompatibility (MHC) class Ib molecule MHC-E loaded with self-peptides derived from the signal sequence of classical MHC class Ia and non-classical MHC class Ib molecules. Enables cytotoxic cells to monitor the expression of MHC class I molecules in healthy cells and to tolerate self. Primarily functions as a ligand binding subunit as it lacks the capacity to signal. KLRD1-KLRC1 acts as an immune inhibitory receptor. Key inhibitory receptor on natural killer (NK) cells that regulates their activation and effector functions. Dominantly counteracts T cell receptor signaling on a subset of memory/effector CD8-positive T cells as part of an antigen-driven response to avoid autoimmunity. On intraepithelial CD8-positive gamma-delta regulatory T cells triggers TGFB1 secretion, which in turn limits the cytotoxic programming of intraepithelial CD8-positive alpha-beta T cells, distinguishing harmless from pathogenic antigens. In MHC-E-rich tumor microenvironment, acts as an immune inhibitory checkpoint and may contribute to progressive loss of effector functions of NK cells and tumor-specific T cells, a state known as cell exhaustion. Upon MHC-E-peptide binding, transmits intracellular signals through KLRC1 immunoreceptor tyrosine-based inhibition motifs (ITIMs) by recruiting INPP5D/SHIP-1 and INPPL1/SHIP-2 tyrosine phosphatases to ITIMs, and ultimately opposing signals transmitted by activating receptors through dephosphorylation of proximal signaling molecules. In terms of biological role, KLRD1-KLRC2 acts as an immune activating receptor. On cytotoxic lymphocyte subsets recognizes MHC-E loaded with signal sequence-derived peptides from non-classical MHC class Ib MHC-G molecules, likely playing a role in the generation and effector functions of adaptive NK cells and in maternal-fetal tolerance during pregnancy. Regulates the effector functions of terminally differentiated cytotoxic lymphocyte subsets, and in particular may play a role in adaptive NK cell response to viral infection. Upon MHC-E-peptide binding, transmits intracellular signals via the adapter protein TYROBP/DAP12, triggering the phosphorylation of proximal signaling molecules and cell activation. This chain is Natural killer cells antigen CD94 (KLRD1), found in Bos taurus (Bovine).